We begin with the raw amino-acid sequence, 524 residues long: Chromosomal replication initiator protein DnaA (524 aa).

The segment at Met-1–Gln-105 is domain I, interacts with DnaA modulators. The tract at residues Pro-95–Ser-183 is disordered. Residues Gln-106–Val-182 are domain II. Over residues Ala-148 to Asp-158 the composition is skewed to pro residues. A domain III, AAA+ region region spans residues Ser-183–Ser-399. ATP is bound by residues Gly-227, Gly-229, Lys-230, and Thr-231. Residues Ser-400–Asn-524 form a domain IV, binds dsDNA region.

It belongs to the DnaA family. As to quaternary structure, oligomerizes as a right-handed, spiral filament on DNA at oriC.

The protein localises to the cytoplasm. Functionally, plays an essential role in the initiation and regulation of chromosomal replication. ATP-DnaA binds to the origin of replication (oriC) to initiate formation of the DNA replication initiation complex once per cell cycle. Binds the DnaA box (a 9 base pair repeat at the origin) and separates the double-stranded (ds)DNA. Forms a right-handed helical filament on oriC DNA; dsDNA binds to the exterior of the filament while single-stranded (ss)DNA is stabiized in the filament's interior. The ATP-DnaA-oriC complex binds and stabilizes one strand of the AT-rich DNA unwinding element (DUE), permitting loading of DNA polymerase. After initiation quickly degrades to an ADP-DnaA complex that is not apt for DNA replication. Binds acidic phospholipids. The sequence is that of Chromosomal replication initiator protein DnaA from Corynebacterium glutamicum (strain R).